Here is a 269-residue protein sequence, read N- to C-terminus: Tryptophan synthase alpha chain (269 aa).

Catalysis depends on proton acceptor residues E49 and D60.

The protein belongs to the TrpA family. Tetramer of two alpha and two beta chains.

It carries out the reaction (1S,2R)-1-C-(indol-3-yl)glycerol 3-phosphate + L-serine = D-glyceraldehyde 3-phosphate + L-tryptophan + H2O. The protein operates within amino-acid biosynthesis; L-tryptophan biosynthesis; L-tryptophan from chorismate: step 5/5. In terms of biological role, the alpha subunit is responsible for the aldol cleavage of indoleglycerol phosphate to indole and glyceraldehyde 3-phosphate. In Delftia acidovorans (strain DSM 14801 / SPH-1), this protein is Tryptophan synthase alpha chain.